The following is a 456-amino-acid chain: N(6)-adenosine-methyltransferase non-catalytic subunit METTL14 (456 aa).

Over residues 39 to 51 the composition is skewed to basic and acidic residues; sequence DEQREIAETRETS. Residues 39 to 74 are disordered; it reads DEQREIAETRETSRASYDTSATVSKRKMPEEGEADE. Positions 52–61 are enriched in polar residues; the sequence is RASYDTSATV. Interaction with METTL3 regions lie at residues 135-136 and 237-238; these read RD and SG. The positively charged region required for RNA-binding stretch occupies residues 245–254; sequence RMCLRKWGFR. Interaction with METTL3 stretches follow at residues 255–258 and 278–287; these read RSED and KAIFQRTKEH. The positively charged region required for RNA-binding stretch occupies residues 297-298; it reads HR. The interaction with METTL3 stretch occupies residues 308–312; that stretch reads NVDID. The disordered stretch occupies residues 395–456; the sequence is LRPKTPPPKS…GPHRGVFAPR (62 aa). The segment covering 410–421 has biased composition (gly residues); sequence ASRGGGRGGPSA. A compositionally biased stretch (basic and acidic residues) spans 423-441; the sequence is RGERGRERNRGSFRGDRGN.

The protein belongs to the MT-A70-like family. In terms of assembly, heterodimer; heterodimerizes with mettl3 to form an antiparallel heterodimer that constitutes an active methyltransferase. Component of the WMM complex, a N6-methyltransferase complex composed of a catalytic subcomplex, named MAC, and of an associated subcomplex, named MACOM. The MAC subcomplex is composed of mettl3 and mettl14.

The protein resides in the nucleus. Functionally, the METTL3-METTL14 heterodimer forms a N6-methyltransferase complex that methylates adenosine residues at the N(6) position of some mRNAs and regulates the circadian clock, differentiation of embryonic stem cells and cortical neurogenesis. In the heterodimer formed with mettl3, mettl14 constitutes the RNA-binding scaffold that recognizes the substrate rather than the catalytic core. N6-methyladenosine (m6A), which takes place at the 5'-[AG]GAC-3' consensus sites of some mRNAs, plays a role in mRNA stability and processing. The polypeptide is N(6)-adenosine-methyltransferase non-catalytic subunit METTL14 (mettl14) (Xenopus tropicalis (Western clawed frog)).